The following is a 694-amino-acid chain: Glycine--tRNA ligase beta subunit (694 aa).

This sequence belongs to the class-II aminoacyl-tRNA synthetase family. In terms of assembly, tetramer of two alpha and two beta subunits.

It localises to the cytoplasm. It catalyses the reaction tRNA(Gly) + glycine + ATP = glycyl-tRNA(Gly) + AMP + diphosphate. This Acidithiobacillus ferrooxidans (strain ATCC 23270 / DSM 14882 / CIP 104768 / NCIMB 8455) (Ferrobacillus ferrooxidans (strain ATCC 23270)) protein is Glycine--tRNA ligase beta subunit.